The following is a 122-amino-acid chain: MARISGVDLPREKRIEIGLTYVYGIGRVSSNRILAKAGVNPDTRVRDLTDEEVAKIRDVIDETMLVEGDLRREIALNIKRLQEIGCYRGIRHRKGLPVRGQKTKTNARTRKGPKRTVANKKK.

A disordered region spans residues 95 to 122 (GLPVRGQKTKTNARTRKGPKRTVANKKK).

This sequence belongs to the universal ribosomal protein uS13 family. Part of the 30S ribosomal subunit. Forms a loose heterodimer with protein S19. Forms two bridges to the 50S subunit in the 70S ribosome.

Functionally, located at the top of the head of the 30S subunit, it contacts several helices of the 16S rRNA. In the 70S ribosome it contacts the 23S rRNA (bridge B1a) and protein L5 of the 50S subunit (bridge B1b), connecting the 2 subunits; these bridges are implicated in subunit movement. Contacts the tRNAs in the A and P-sites. This is Small ribosomal subunit protein uS13 from Lachnoclostridium phytofermentans (strain ATCC 700394 / DSM 18823 / ISDg) (Clostridium phytofermentans).